A 317-amino-acid polypeptide reads, in one-letter code: Melanocyte-stimulating hormone receptor (317 aa).

The Extracellular portion of the chain corresponds to 1-37 (MAVQGSQRRLLGSLNSTPTAIPQLGLAANQTGARCLE). N-linked (GlcNAc...) asparagine glycosylation is present at Asn-29. The chain crosses the membrane as a helical span at residues 38-63 (VSIPDGLFLSLGLVSLVENMLVVATI). At 64 to 72 (AKNRNLHSP) the chain is on the cytoplasmic side. Residues 73-93 (MYCFICCLALSDLLVSGSNVL) traverse the membrane as a helical segment. The Extracellular segment spans residues 94–118 (ETAVILLLEAGALVARAAVLQQVDN). The chain crosses the membrane as a helical span at residues 119-140 (VIDVITCSSMLSSLCFLGAIAV). The Cytoplasmic portion of the chain corresponds to 141 to 163 (DRYISIFYALRYHSIVTLPRARR). A helical transmembrane segment spans residues 164-183 (AIAAIWVASVLFSTLFIAYC). Residues 184–191 (DHTAVLLC) are Extracellular-facing. The helical transmembrane segment at 192 to 211 (LVVFFLAVLVLMAVLYVHML) threads the bilayer. At 212–240 (ARACQHAQGIARLHKRQRPVHQGFGLKGA) the chain is on the cytoplasmic side. The helical transmembrane segment at 241-266 (VTLTILLGIFFLCWGPFFLHLTLIVL) threads the bilayer. Residues 267–279 (CPEHPTCGCIFKN) are Extracellular-facing. The helical transmembrane segment at 280–300 (FNLFLALIICNAIIDPLIYAF) threads the bilayer. At 301–317 (HSQELRRTLKEVLTCSW) the chain is on the cytoplasmic side. The S-palmitoyl cysteine moiety is linked to residue Cys-315.

The protein belongs to the G-protein coupled receptor 1 family. Interacts with MGRN1, but does not undergo MGRN1-mediated ubiquitination; this interaction competes with GNAS-binding and thus inhibits agonist-induced cAMP production. Interacts with OPN3; the interaction results in a decrease in MC1R-mediated cAMP signaling and ultimately a decrease in melanin production in melanocytes.

The protein resides in the cell membrane. Functionally, receptor for MSH (alpha, beta and gamma) and ACTH. The activity of this receptor is mediated by G proteins which activate adenylate cyclase. Mediates melanogenesis, the production of eumelanin (black/brown) and phaeomelanin (red/yellow), via regulation of cAMP signaling in melanocytes. This is Melanocyte-stimulating hormone receptor (MC1R) from Pan troglodytes (Chimpanzee).